Here is a 465-residue protein sequence, read N- to C-terminus: Phosphomethylpyrimidine synthase (465 aa).

Residues Asn80, Met109, Tyr139, His175, 195-197, 236-239, and Glu275 each bind substrate; these read SRG and DSLR. Zn(2+) is bound at residue His279. Residue Tyr302 participates in substrate binding. His343 contacts Zn(2+). Cys423, Cys426, and Cys431 together coordinate [4Fe-4S] cluster.

It belongs to the ThiC family. It depends on [4Fe-4S] cluster as a cofactor.

The catalysed reaction is 5-amino-1-(5-phospho-beta-D-ribosyl)imidazole + S-adenosyl-L-methionine = 4-amino-2-methyl-5-(phosphooxymethyl)pyrimidine + CO + 5'-deoxyadenosine + formate + L-methionine + 3 H(+). It participates in cofactor biosynthesis; thiamine diphosphate biosynthesis. Functionally, catalyzes the synthesis of the hydroxymethylpyrimidine phosphate (HMP-P) moiety of thiamine from aminoimidazole ribotide (AIR) in a radical S-adenosyl-L-methionine (SAM)-dependent reaction. This Synechococcus sp. (strain CC9311) protein is Phosphomethylpyrimidine synthase.